The chain runs to 105 residues: U2-lycotoxin-Ls1d (105 aa).

Positions 1-17 (MIKYVLISALLVVAVYS) are cleaved as a signal peptide. A propeptide spanning residues 18-41 (FTIEDNEDALLEEAEDELDTEEER) is cleaved from the precursor. Disulfide bonds link Cys-51/Cys-67, Cys-58/Cys-97, Cys-60/Cys-83, and Cys-69/Cys-81.

This sequence belongs to the neurotoxin 04 (omega-agtx) family. 01 (type I omega-agtx) subfamily. Expressed by the venom gland.

The protein resides in the secreted. Its function is as follows. Insecticidal to house crickets. It induces an excitatory slow-onset impact that leads to irreversible spastic paralysis. It also modifies human voltage-gated potassium channel Kv1.5/KCNA5. Most likely, it binds to the voltage-sensing domain of the channel, suggesting it does not block the pore but prevents its opening at physiological membrane potentials. The recombinant peptide binds to the channel in an irreversible manner and slows down the hKv1.5 current activation kinetics. It is not toxic to mice, when intracranially injected (at 0.5 ug/g mouse). The polypeptide is U2-lycotoxin-Ls1d (Lycosa singoriensis (Wolf spider)).